Reading from the N-terminus, the 288-residue chain is Bis(5'-nucleosyl)-tetraphosphatase, symmetrical (288 aa).

It belongs to the Ap4A hydrolase family.

The enzyme catalyses P(1),P(4)-bis(5'-adenosyl) tetraphosphate + H2O = 2 ADP + 2 H(+). Its function is as follows. Hydrolyzes diadenosine 5',5'''-P1,P4-tetraphosphate to yield ADP. The sequence is that of Bis(5'-nucleosyl)-tetraphosphatase, symmetrical from Baumannia cicadellinicola subsp. Homalodisca coagulata.